The chain runs to 95 residues: MNNKLTALIFLGLLAIASCKWLNEKSIQNKIDEKIGKNFLGGMAKAVVHKLAKNEFMCVANVDMTKSCDTHCQKASGEKGYCHGTKCKCGVPLSY.

Positions 1–19 are cleaved as a signal peptide; sequence MNNKLTALIFLGLLAIASC. In terms of domain architecture, BetaSPN-type CS-alpha/beta spans 55–95; it reads EFMCVANVDMTKSCDTHCQKASGEKGYCHGTKCKCGVPLSY. 3 disulfides stabilise this stretch: Cys-58–Cys-82, Cys-68–Cys-87, and Cys-72–Cys-89.

Belongs to the long chain scorpion toxin family. Class 3 subfamily. As to expression, expressed by the venom gland.

The protein resides in the secreted. Functionally, has antimicrobial activity against yeasts and bacteria. In Opistophthalmus carinatus (African yellow leg scorpion), this protein is Opiscorpine-3.